We begin with the raw amino-acid sequence, 508 residues long: Glycerol kinase (508 aa).

Thr-17 lines the ADP pocket. Positions 17, 18, and 19 each coordinate ATP. Thr-17 contributes to the sn-glycerol 3-phosphate binding site. Arg-21 serves as a coordination point for ADP. Residues Arg-87, Glu-88, Tyr-139, and Asp-256 each coordinate sn-glycerol 3-phosphate. Glycerol is bound by residues Arg-87, Glu-88, Tyr-139, Asp-256, and Gln-257. 2 residues coordinate ADP: Thr-278 and Gly-322. The ATP site is built by Thr-278, Gly-322, Gln-326, and Ala-423. Residues Ala-423 and Asn-427 each contribute to the ADP site.

This sequence belongs to the FGGY kinase family.

It carries out the reaction glycerol + ATP = sn-glycerol 3-phosphate + ADP + H(+). Its pathway is polyol metabolism; glycerol degradation via glycerol kinase pathway; sn-glycerol 3-phosphate from glycerol: step 1/1. Its activity is regulated as follows. Inhibited by fructose 1,6-bisphosphate (FBP). In terms of biological role, key enzyme in the regulation of glycerol uptake and metabolism. Catalyzes the phosphorylation of glycerol to yield sn-glycerol 3-phosphate. In Corynebacterium efficiens (strain DSM 44549 / YS-314 / AJ 12310 / JCM 11189 / NBRC 100395), this protein is Glycerol kinase.